The following is a 153-amino-acid chain: Aspartate carbamoyltransferase regulatory chain (153 aa).

Cys-108, Cys-113, Cys-137, and Cys-140 together coordinate Zn(2+).

This sequence belongs to the PyrI family. In terms of assembly, contains catalytic and regulatory chains. Zn(2+) is required as a cofactor.

Involved in allosteric regulation of aspartate carbamoyltransferase. The polypeptide is Aspartate carbamoyltransferase regulatory chain (Methanosphaera stadtmanae (strain ATCC 43021 / DSM 3091 / JCM 11832 / MCB-3)).